The sequence spans 426 residues: Serine--tRNA ligase (426 aa).

Residue 233–235 (TAE) participates in L-serine binding. 264–266 (RSE) serves as a coordination point for ATP. E287 provides a ligand contact to L-serine. 351–354 (EISS) serves as a coordination point for ATP. Residue S387 participates in L-serine binding.

Belongs to the class-II aminoacyl-tRNA synthetase family. Type-1 seryl-tRNA synthetase subfamily. As to quaternary structure, homodimer. The tRNA molecule binds across the dimer.

The protein localises to the cytoplasm. The catalysed reaction is tRNA(Ser) + L-serine + ATP = L-seryl-tRNA(Ser) + AMP + diphosphate + H(+). It carries out the reaction tRNA(Sec) + L-serine + ATP = L-seryl-tRNA(Sec) + AMP + diphosphate + H(+). Its pathway is aminoacyl-tRNA biosynthesis; selenocysteinyl-tRNA(Sec) biosynthesis; L-seryl-tRNA(Sec) from L-serine and tRNA(Sec): step 1/1. Its function is as follows. Catalyzes the attachment of serine to tRNA(Ser). Is also able to aminoacylate tRNA(Sec) with serine, to form the misacylated tRNA L-seryl-tRNA(Sec), which will be further converted into selenocysteinyl-tRNA(Sec). The protein is Serine--tRNA ligase of Francisella philomiragia subsp. philomiragia (strain ATCC 25017 / CCUG 19701 / FSC 153 / O#319-036).